The primary structure comprises 486 residues: Histamine H1 receptor (486 aa).

Topologically, residues 1–29 (MSFANTSSTFEDKMCEGNRTAMASPQLLP) are extracellular. N-linked (GlcNAc...) asparagine glycans are attached at residues Asn-5 and Asn-18. A helical transmembrane segment spans residues 30–50 (LVVVLSSISLVTVGLNLLVLY). Residues 51-64 (AVHSERKLHTVGNL) are Cytoplasmic-facing. The helical transmembrane segment at 65–89 (YIVSLSVADLIVGAVVMPMNILYLI) threads the bilayer. Over 90-97 (MTKWSLGR) the chain is Extracellular. Residues 98–123 (PLCLFWLSMDYVASTASIFSVFILCI) form a helical membrane-spanning segment. A disulfide bond links Cys-100 and Cys-180. Asp-107 and Thr-112 together coordinate histamine. The interval 107–112 (DYVAST) is important for agonist binding. The Cytoplasmic segment spans residues 124 to 144 (DRYRSVQQPLRYLRYRTKTRA). Residues Thr-140 and Thr-142 each carry the phosphothreonine modification. The chain crosses the membrane as a helical span at residues 145 to 164 (SATILGAWFFSFLWVIPILG). Residues 165–188 (WHHFMPPAPELREDKCETDFYNVT) are Extracellular-facing. Residues 189–211 (WFKIMTAIINFYLPTLLMLWFYV) form a helical membrane-spanning segment. Histamine is bound at residue Asn-198. At 212–415 (KIYKAVRRHC…LNRERKAAKQ (204 aa)) the chain is on the cytoplasmic side. Ser-230 carries the post-translational modification Phosphoserine. Positions 241 to 253 (SDDTKEGAKKPGR) are enriched in basic and acidic residues. 2 disordered regions span residues 241–295 (SDDT…GERE) and 310–379 (VAEG…RSGS). Phosphoserine is present on residues Ser-342 and Ser-345. A compositionally biased stretch (polar residues) spans 347–365 (DQTLVDQQSFSRTTDSDTS). Ser-379, Ser-381, Ser-395, and Ser-397 each carry phosphoserine. A helical membrane pass occupies residues 416–439 (LGFIMAAFILCWIPYFIFFMVIAF). The segment at 423–427 (FILCW) is important for agonist binding. Tyr-430 lines the histamine pocket. Cys-440 and Cys-443 are joined by a disulfide. Residues 440–445 (CKSCCS) are Extracellular-facing. A helical transmembrane segment spans residues 446–468 (EPMHMFTIWLGYINSTLNPLIYP). Over 469-486 (LCNENFKKTFKKILHIRS) the chain is Cytoplasmic.

It belongs to the G-protein coupled receptor 1 family. Phosphorylation at sites in the second and third cytoplasmic loops independently contribute to agonist-induced receptor down-regulation.

It localises to the cell membrane. Its function is as follows. G-protein-coupled receptor for histamine, a biogenic amine that functions as an immune modulator and a neurotransmitter. Through the H1 receptor, histamine mediates the contraction of smooth muscles and increases capillary permeability due to contraction of terminal venules. Also mediates neurotransmission in the central nervous system and thereby regulates circadian rhythms, emotional and locomotor activities as well as cognitive functions. This chain is Histamine H1 receptor, found in Rattus norvegicus (Rat).